The primary structure comprises 326 residues: Nicotianamine synthase 2 (326 aa).

Belongs to the nicotianamine synthase (NAS)-like family. As to expression, expressed in roots.

It catalyses the reaction 3 S-adenosyl-L-methionine = nicotianamine + 3 S-methyl-5'-thioadenosine + 3 H(+). Its function is as follows. Synthesizes nicotianamine, a polyamine that is the first intermediate in the synthesis of the phytosiderophores of the mugineic acid type found in gramineae which serve as a sensor for the physiological iron status within the plant, and/or might be involved in the transport of iron. The polypeptide is Nicotianamine synthase 2 (NAS2) (Oryza sativa subsp. japonica (Rice)).